Reading from the N-terminus, the 350-residue chain is Protein-glutamate methylesterase/protein-glutamine glutaminase (350 aa).

Residues 5-122 (RVLSVDDSAL…REGMLAYSEM (118 aa)) form the Response regulatory domain. At D56 the chain carries 4-aspartylphosphate. The 187-residue stretch at 152–338 (LLSSEKLLVI…DLSQVVSQQM (187 aa)) folds into the CheB-type methylesterase domain. Catalysis depends on residues S164, H190, and D286.

It belongs to the CheB family. Post-translationally, phosphorylated by CheA. Phosphorylation of the N-terminal regulatory domain activates the methylesterase activity.

Its subcellular location is the cytoplasm. It catalyses the reaction [protein]-L-glutamate 5-O-methyl ester + H2O = L-glutamyl-[protein] + methanol + H(+). The enzyme catalyses L-glutaminyl-[protein] + H2O = L-glutamyl-[protein] + NH4(+). Functionally, involved in chemotaxis. Part of a chemotaxis signal transduction system that modulates chemotaxis in response to various stimuli. Catalyzes the demethylation of specific methylglutamate residues introduced into the chemoreceptors (methyl-accepting chemotaxis proteins or MCP) by CheR. Also mediates the irreversible deamidation of specific glutamine residues to glutamic acid. In Enterobacter cloacae, this protein is Protein-glutamate methylesterase/protein-glutamine glutaminase.